A 349-amino-acid polypeptide reads, in one-letter code: MLDLSLPSGLRDLLPDHSAHLAELSSKLHDVFSRFGYRRVFLPTLERLDVVERGLSPAALADVMKFVEPGSGEVVAIRPDITPQIARLYAARPDALPSPARLCYDGPVLRAREARAGRPREVYQAGVELLGAGGASADAEALVLLARSLERVGLKAPRVEVGHARFAEAVMEAARLPERLRSAAWEALSRKDRAALAAAAAKGRGSAEAREAVPQLAGLFGDGALDRARAIARAVPEAAAPLAETEAALRIARRRGVREVAVDLGEARGLGYYTGITFAGYAPGAGAAVARGGRYDGLLARFGRPGPAIGFAVDLEFATQALERVNGRGRGVRPRRASARGGRARARPR.

The disordered stretch occupies residues 327 to 349; sequence GRGRGVRPRRASARGGRARARPR. The span at 330–349 shows a compositional bias: basic residues; sequence RGVRPRRASARGGRARARPR.

The protein belongs to the class-II aminoacyl-tRNA synthetase family. HisZ subfamily. As to quaternary structure, heteromultimer composed of HisG and HisZ subunits.

The protein localises to the cytoplasm. The protein operates within amino-acid biosynthesis; L-histidine biosynthesis; L-histidine from 5-phospho-alpha-D-ribose 1-diphosphate: step 1/9. Required for the first step of histidine biosynthesis. May allow the feedback regulation of ATP phosphoribosyltransferase activity by histidine. The polypeptide is ATP phosphoribosyltransferase regulatory subunit (Anaeromyxobacter sp. (strain K)).